The following is a 385-amino-acid chain: Trans-enoyl reductase poxH (385 aa).

64 to 67 (QPYS) lines the NADP(+) pocket. 156–163 (PDPAAPPI) contacts substrate. NADP(+) contacts are provided by residues 199-202 (STSV), 223-226 (SGTD), Tyr-241, and 289-290 (LG). 309–313 (HMAPL) provides a ligand contact to substrate. 372–373 (KR) contributes to the NADP(+) binding site.

The protein belongs to the zinc-containing alcohol dehydrogenase family. Monomer.

It functions in the pathway secondary metabolite biosynthesis. Functionally, trans-enoyl reductase; part of the gene cluster that mediates the biosynthesis of oxaleimides, cytotoxic compounds containing an unusual disubstituted succinimide moiety. The first step of the pathway is provided by the HR-PKS poxF that serves in a new mode of collaborative biosynthesis with the PKS-NRPS poxE, by providing the olefin containing amino acid substrate via the synthesis of an ACP-bound dec-4-enoate. The cytochrome P450 monooxygenase poxM-catalyzed oxidation at the alpha-position creates the enzyme-bound 2-hydroxydec-4-enoyl-ACP thioester, which may be prone to spontaneous hydrolysis to yield 2-hydroxydec-4-enoic acid due to increased electrophilicity of the carbonyl. 2-hydroxydec-4-enoic acid can then be further oxidized by poxM to yield the alpha-ketoacid 2-oxodec-4-enoicacid, which is reductively aminated by the aminotransferase poxL to yield (S,E)-2-aminodec-4-enoic acid. The Hybrid PKS-NRPS synthetase poxE then performs condensation between the octaketide product of its PKS modules and the amino group of (S,E)-2-aminodec-4-enoic acid which is activated and incorporated by the adenylation domain. The resulting aminoacyl product can be cyclized by the Diels-Alderase PoxQ and reductively released by the reductive (R) domain of poxE to yield an aldehyde intermediate. The released aldehyde is then substrate for a Knoevenagel condensation by the hydrolyase poxO followed by an oxidation at the 5-position of the pyrrolidone ring. The presence of the olefin from the amino acid building block allows for migration of the substituted allyl group to occur. This allylic transposition reaction takes place in a conjugate addition, semipinacol-like fashion to yield a succinimide intermediate. Iterative two-electron oxidations of the C7 methyl of the succinimide intermediate to the carboxylic acid can be catalyzed by one of two remaining cytochrome P450 monooxygenasess poxC or poxD to yield oxaleimide A. Subsequent oxidation yields the maleimide scaffold oxaleimide I. Both oxaleimide A and oxaleimide I can undergo oxidative modifications in the decalin ring to yield the series of products oxaleimides B to H. The sequence is that of Trans-enoyl reductase poxH from Penicillium oxalicum (strain 114-2 / CGMCC 5302) (Penicillium decumbens).